We begin with the raw amino-acid sequence, 102 residues long: NADH-quinone oxidoreductase subunit K (102 aa).

3 consecutive transmembrane segments (helical) span residues 6–26, 30–50, and 65–85; these read MEHGLLLAAALFCIGLCGLLI, LLYILMSIEIMMNASALAFVV, and ILVISLAAAEASIGLALLLLL.

The protein belongs to the complex I subunit 4L family. As to quaternary structure, NDH-1 is composed of 13 different subunits. Subunits NuoA, H, J, K, L, M, N constitute the membrane sector of the complex.

The protein resides in the cell inner membrane. The catalysed reaction is a quinone + NADH + 5 H(+)(in) = a quinol + NAD(+) + 4 H(+)(out). Its function is as follows. NDH-1 shuttles electrons from NADH, via FMN and iron-sulfur (Fe-S) centers, to quinones in the respiratory chain. The immediate electron acceptor for the enzyme in this species is believed to be ubiquinone. Couples the redox reaction to proton translocation (for every two electrons transferred, four hydrogen ions are translocated across the cytoplasmic membrane), and thus conserves the redox energy in a proton gradient. The chain is NADH-quinone oxidoreductase subunit K from Shewanella oneidensis (strain ATCC 700550 / JCM 31522 / CIP 106686 / LMG 19005 / NCIMB 14063 / MR-1).